A 37-amino-acid polypeptide reads, in one-letter code: MSDIN-like toxin proprotein 5 (37 aa).

The propeptide occupies 1 to 10; that stretch reads MSDINATRLP. Positions 11-20 form a cross-link, cyclopeptide (Leu-Pro); sequence LFFPPDFRPP. Residues 21–37 constitute a propeptide that is removed on maturation; that stretch reads CVGDADNFTLTRGENLC.

The protein belongs to the MSDIN fungal toxin family. In terms of processing, processed by the macrocyclase-peptidase enzyme POPB to yield a toxic cyclic decapeptide. POPB first removes 10 residues from the N-terminus. Conformational trapping of the remaining peptide forces the enzyme to release this intermediate rather than proceed to macrocyclization. The enzyme rebinds the remaining peptide in a different conformation and catalyzes macrocyclization of the N-terminal 10 residues. In terms of tissue distribution, expressed in basidiocarps.

Functionally, probable toxin that belongs to the MSDIN-like toxin family responsible for a large number of food poisoning cases and deaths. This chain is MSDIN-like toxin proprotein 5, found in Amanita exitialis (Guangzhou destroying angel).